Reading from the N-terminus, the 820-residue chain is Trimethylamine-N-oxide reductase (820 aa).

Residues 1-33 (MAITRRSFLKGVATTSAASVIGPSLLASASANA) constitute a signal peptide (tat-type signal). Residue Ser179 participates in Mo-bis(molybdopterin guanine dinucleotide) binding.

This sequence belongs to the prokaryotic molybdopterin-containing oxidoreductase family. Requires Mo-bis(molybdopterin guanine dinucleotide) as cofactor. Predicted to be exported by the Tat system. The position of the signal peptide cleavage has not been experimentally proven.

The protein resides in the periplasm. The enzyme catalyses trimethylamine + 2 Fe(III)-[cytochrome c] + H2O = trimethylamine N-oxide + 2 Fe(II)-[cytochrome c] + 3 H(+). In terms of biological role, reduces trimethylamine-N-oxide (TMAO) into trimethylamine; an anaerobic reaction coupled to energy-yielding reactions. The protein is Trimethylamine-N-oxide reductase (torA) of Vibrio parahaemolyticus serotype O3:K6 (strain RIMD 2210633).